A 433-amino-acid polypeptide reads, in one-letter code: Putative zinc metalloprotease BB_0118 (433 aa).

Histidine 17 contributes to the Zn(2+) binding site. Glutamate 18 is an active-site residue. Histidine 21 serves as a coordination point for Zn(2+). The chain crosses the membrane as a helical span at residues 98 to 120; it reads ILIYFAGPLFNLIFSFIVFIFIS. Positions 193-265 constitute a PDZ domain; the sequence is TVSLQDFLKE…VVEIKFSRNG (73 aa). Helical transmembrane passes span 334–356, 366–388, and 401–423; these read VSGPVGIVGILSSSYSLGILYWI, LAGMNLFFIVIPIFDGGQIFISF, and TIYSFYSFGIFFGLFLFGLGLFN.

It belongs to the peptidase M50B family. Zn(2+) is required as a cofactor.

It is found in the cell inner membrane. The chain is Putative zinc metalloprotease BB_0118 from Borreliella burgdorferi (strain ATCC 35210 / DSM 4680 / CIP 102532 / B31) (Borrelia burgdorferi).